A 373-amino-acid polypeptide reads, in one-letter code: DNA replication and repair protein RecF (373 aa).

30–37 provides a ligand contact to ATP; the sequence is GPNGQGKT.

Belongs to the RecF family.

The protein localises to the cytoplasm. The RecF protein is involved in DNA metabolism; it is required for DNA replication and normal SOS inducibility. RecF binds preferentially to single-stranded, linear DNA. It also seems to bind ATP. This is DNA replication and repair protein RecF from Streptomyces avermitilis (strain ATCC 31267 / DSM 46492 / JCM 5070 / NBRC 14893 / NCIMB 12804 / NRRL 8165 / MA-4680).